A 119-amino-acid chain; its full sequence is MKKLQNFNTFVSDNKNKNIFSALKDIHGVNLKKINKMGLVMGLDKFEKVSSMNFELFSLIKKQAIFFYNLEENKIFNNVNKKKKIKNYTGMRHILKLPVRGQRTHTNAKTPSKNIKKEL.

This sequence belongs to the universal ribosomal protein uS13 family. In terms of assembly, part of the small ribosomal subunit.

It is found in the mitochondrion. Its function is as follows. Located at the top of the head of the small subunit, it contacts several helices of the small subunit rRNA. In Acanthamoeba castellanii (Amoeba), this protein is Small ribosomal subunit protein uS13m (RPS13).